Consider the following 618-residue polypeptide: 1-deoxy-D-xylulose-5-phosphate synthase (618 aa).

Thiamine diphosphate contacts are provided by residues His-70 and 111–113 (GHS). Asp-142 serves as a coordination point for Mg(2+). Thiamine diphosphate-binding positions include 143–144 (GS), Asn-171, Tyr-278, and Glu-360. Asn-171 is a Mg(2+) binding site.

The protein belongs to the transketolase family. DXPS subfamily. As to quaternary structure, homodimer. The cofactor is Mg(2+). Requires thiamine diphosphate as cofactor.

It catalyses the reaction D-glyceraldehyde 3-phosphate + pyruvate + H(+) = 1-deoxy-D-xylulose 5-phosphate + CO2. The protein operates within metabolic intermediate biosynthesis; 1-deoxy-D-xylulose 5-phosphate biosynthesis; 1-deoxy-D-xylulose 5-phosphate from D-glyceraldehyde 3-phosphate and pyruvate: step 1/1. In terms of biological role, catalyzes the acyloin condensation reaction between C atoms 2 and 3 of pyruvate and glyceraldehyde 3-phosphate to yield 1-deoxy-D-xylulose-5-phosphate (DXP). This chain is 1-deoxy-D-xylulose-5-phosphate synthase, found in Helicobacter pylori (strain HPAG1).